Consider the following 593-residue polypeptide: DNA primase (593 aa).

The segment at 38-62 (CPFHQEKTPSFTVSDSKRFFYCFGC) adopts a CHC2-type zinc-finger fold. The 83-residue stretch at 250 to 332 (NRSILVEGYF…EKKISFIRLP (83 aa)) folds into the Toprim domain. Positions 256, 300, and 302 each coordinate Mg(2+).

Belongs to the DnaG primase family. In terms of assembly, monomer. Interacts with DnaB. Requires Zn(2+) as cofactor. Mg(2+) serves as cofactor.

It carries out the reaction ssDNA + n NTP = ssDNA/pppN(pN)n-1 hybrid + (n-1) diphosphate.. Functionally, RNA polymerase that catalyzes the synthesis of short RNA molecules used as primers for DNA polymerase during DNA replication. This Rickettsia prowazekii (strain Madrid E) protein is DNA primase.